We begin with the raw amino-acid sequence, 345 residues long: Glycerol-3-phosphate dehydrogenase [NAD(P)+] (345 aa).

NADPH-binding residues include Ser-11, Trp-12, His-32, Arg-33, and Lys-106. Residues Lys-106, Gly-137, and Ser-139 each coordinate sn-glycerol 3-phosphate. Ala-141 lines the NADPH pocket. Sn-glycerol 3-phosphate is bound by residues Lys-192, Asp-245, Ser-255, Arg-256, and Asn-257. Lys-192 serves as the catalytic Proton acceptor. Arg-256 lines the NADPH pocket. 2 residues coordinate NADPH: Val-280 and Glu-282.

This sequence belongs to the NAD-dependent glycerol-3-phosphate dehydrogenase family.

The protein resides in the cytoplasm. It carries out the reaction sn-glycerol 3-phosphate + NAD(+) = dihydroxyacetone phosphate + NADH + H(+). The enzyme catalyses sn-glycerol 3-phosphate + NADP(+) = dihydroxyacetone phosphate + NADPH + H(+). It functions in the pathway membrane lipid metabolism; glycerophospholipid metabolism. With respect to regulation, does not seem to be inhibited by sn-glycerol 3-phosphate, in contrast to the E.coli homolog enzyme which is very sensitive to allosteric inhibition by G3P. Catalyzes the reduction of the glycolytic intermediate dihydroxyacetone phosphate (DHAP) to sn-glycerol 3-phosphate (G3P), the key precursor for phospholipid synthesis. The sequence is that of Glycerol-3-phosphate dehydrogenase [NAD(P)+] from Bacillus subtilis (strain 168).